A 96-amino-acid chain; its full sequence is Small ribosomal subunit protein bS6 (96 aa).

Belongs to the bacterial ribosomal protein bS6 family.

Its function is as follows. Binds together with bS18 to 16S ribosomal RNA. In Streptococcus pneumoniae serotype 19F (strain G54), this protein is Small ribosomal subunit protein bS6.